The sequence spans 333 residues: Low specificity L-threonine aldolase (333 aa).

N6-(pyridoxal phosphate)lysine is present on Lys197.

Belongs to the threonine aldolase family. In terms of assembly, homotetramer. The cofactor is pyridoxal 5'-phosphate.

The catalysed reaction is L-threonine = acetaldehyde + glycine. The enzyme catalyses L-allo-threonine = acetaldehyde + glycine. Catalyzes the cleavage of L-allo-threonine and L-threonine to glycine and acetaldehyde. L-threo-phenylserine and L-erythro-phenylserine are also good substrates. The protein is Low specificity L-threonine aldolase (ltaE) of Escherichia coli O157:H7.